The sequence spans 157 residues: Protein Smg homolog (157 aa).

It belongs to the Smg family.

The chain is Protein Smg homolog from Shewanella pealeana (strain ATCC 700345 / ANG-SQ1).